The following is a 149-amino-acid chain: Ribose-5-phosphate isomerase B (149 aa).

9 to 10 (DH) lines the D-ribulose 5-phosphate pocket. The active-site Proton acceptor is Cys-66. D-ribulose 5-phosphate is bound at residue 67 to 71 (GTGVG). The active-site Proton donor is the His-99. Positions 100, 110, 133, and 137 each coordinate D-ribulose 5-phosphate.

This sequence belongs to the LacAB/RpiB family. In terms of assembly, homodimer, and homotetramer.

It catalyses the reaction aldehydo-D-ribose 5-phosphate = D-ribulose 5-phosphate. The catalysed reaction is D-allose 6-phosphate = D-allulose 6-phosphate. It functions in the pathway carbohydrate degradation; pentose phosphate pathway; D-ribose 5-phosphate from D-ribulose 5-phosphate (non-oxidative stage): step 1/1. Its activity is regulated as follows. Inhibited by iodoacetate and glucose 6-phosphate. Functionally, catalyzes the interconversion of ribulose-5-P and ribose-5-P. It probably also has activity on D-allose 6-phosphate. This Escherichia coli (strain K12) protein is Ribose-5-phosphate isomerase B.